Here is a 248-residue protein sequence, read N- to C-terminus: Homeobox protein CHOX-CAD (248 aa).

Residues 137–196 (KDKYRVVYTDHQRLELEKEFHYSRYITIRRKAELAAALGLTERQVKIWFQNRRAKERKVN) constitute a DNA-binding region (homeobox). Residues 192 to 248 (ERKVNKKKLQQQSQPTSTTTPTPPAVGTPGPMGTLCSGSAPSLVSSSPLTIKEEFMP) form a disordered region. 2 stretches are compositionally biased toward low complexity: residues 201-211 (QQQSQPTSTTT) and 228-240 (SGSAPSLVSSSPL).

The protein belongs to the Caudal homeobox family.

It is found in the nucleus. Its function is as follows. May play an important role during the early steps of organogenesis. The protein is Homeobox protein CHOX-CAD (CHOX-CAD1) of Gallus gallus (Chicken).